A 61-amino-acid polypeptide reads, in one-letter code: Metallothionein-2B (61 aa).

Residue Met-1 is modified to N-acetylmethionine. Positions 1–29 (MDPNCSCATGDSCTCASSCKCKECKCTSC) are beta. A divalent metal cation is bound by residues Cys-5, Cys-7, Cys-13, Cys-15, Cys-19, Cys-21, Cys-24, Cys-26, Cys-29, Cys-33, Cys-34, Cys-36, Cys-37, Cys-41, Cys-44, Cys-48, Cys-50, Cys-57, Cys-59, and Cys-60. Residues 30–61 (KKSCCSCCPAGCTKCAQGCICKGASDKCSCCA) form an alpha region.

The protein belongs to the metallothionein superfamily. Type 1 family. Monomer.

Metallothioneins have a high content of cysteine residues that bind various heavy metals; these proteins are transcriptionally regulated by both heavy metals and glucocorticoids. The polypeptide is Metallothionein-2B (Oryctolagus cuniculus (Rabbit)).